The primary structure comprises 142 residues: Small ribosomal subunit protein bS6 (142 aa).

Residues 96-142 form a disordered region; the sequence is VTGQSEMLKAEENRSERRERRERPEHDGSADGDDSDSDSDNSDNADE. A compositionally biased stretch (basic and acidic residues) spans 103–124; it reads LKAEENRSERRERRERPEHDGS. A compositionally biased stretch (acidic residues) spans 125–142; the sequence is ADGDDSDSDSDNSDNADE.

This sequence belongs to the bacterial ribosomal protein bS6 family.

Binds together with bS18 to 16S ribosomal RNA. The protein is Small ribosomal subunit protein bS6 of Pseudomonas fluorescens (strain Pf0-1).